Reading from the N-terminus, the 386-residue chain is Outer membrane protein assembly factor BamB (386 aa).

A signal peptide spans 1-20 (MKKLFNQVLVAAGVLALLAG). Cys21 carries N-palmitoyl cysteine lipidation. Cys21 carries the S-diacylglycerol cysteine lipid modification.

This sequence belongs to the BamB family. As to quaternary structure, part of the Bam complex.

It localises to the cell outer membrane. Part of the outer membrane protein assembly complex, which is involved in assembly and insertion of beta-barrel proteins into the outer membrane. This Vibrio cholerae serotype O1 (strain ATCC 39315 / El Tor Inaba N16961) protein is Outer membrane protein assembly factor BamB.